A 172-amino-acid polypeptide reads, in one-letter code: Shikimate kinase (172 aa).

14 to 19 (GAGKST) lines the ATP pocket. Ser-18 contributes to the Mg(2+) binding site. The substrate site is built by Asp-36, Arg-60, and Gly-82. Arg-120 serves as a coordination point for ATP. Arg-139 contributes to the substrate binding site. Gln-156 contacts ATP.

This sequence belongs to the shikimate kinase family. As to quaternary structure, monomer. It depends on Mg(2+) as a cofactor.

It is found in the cytoplasm. It catalyses the reaction shikimate + ATP = 3-phosphoshikimate + ADP + H(+). It participates in metabolic intermediate biosynthesis; chorismate biosynthesis; chorismate from D-erythrose 4-phosphate and phosphoenolpyruvate: step 5/7. Its function is as follows. Catalyzes the specific phosphorylation of the 3-hydroxyl group of shikimic acid using ATP as a cosubstrate. In Aliivibrio fischeri (strain ATCC 700601 / ES114) (Vibrio fischeri), this protein is Shikimate kinase.